Here is an 874-residue protein sequence, read N- to C-terminus: Alanine--tRNA ligase (874 aa).

Residues histidine 562, histidine 566, cysteine 663, and histidine 667 each contribute to the Zn(2+) site.

This sequence belongs to the class-II aminoacyl-tRNA synthetase family. Zn(2+) is required as a cofactor.

The protein resides in the cytoplasm. The catalysed reaction is tRNA(Ala) + L-alanine + ATP = L-alanyl-tRNA(Ala) + AMP + diphosphate. Catalyzes the attachment of alanine to tRNA(Ala) in a two-step reaction: alanine is first activated by ATP to form Ala-AMP and then transferred to the acceptor end of tRNA(Ala). Also edits incorrectly charged Ser-tRNA(Ala) and Gly-tRNA(Ala) via its editing domain. The polypeptide is Alanine--tRNA ligase (Bordetella pertussis (strain Tohama I / ATCC BAA-589 / NCTC 13251)).